The following is a 202-amino-acid chain: Large ribosomal subunit protein eL13 (202 aa).

Belongs to the eukaryotic ribosomal protein eL13 family.

The protein is Large ribosomal subunit protein eL13 (RPL13) of Nicotiana tabacum (Common tobacco).